The chain runs to 315 residues: HTH-type transcriptional regulator TreR (315 aa).

Positions 5–59 (LTIKDIARLSGVGKSTVSRVLNNESGVSQLTRERVEAVMNQHGFSPSRSARAMRG) constitute an HTH lacI-type domain. The H-T-H motif DNA-binding region spans 7–26 (IKDIARLSGVGKSTVSRVLN). Residues 71-77 (RLDSLSE), G126, R147, 187-190 (DVTT), R194, T242, and Y284 contribute to the alpha,alpha-trehalose 6-phosphate site.

As to quaternary structure, homodimer.

Repressor of the treBC operon. It is able to bind trehalose-6-phosphate and trehalose. The protein is HTH-type transcriptional regulator TreR (treR) of Escherichia coli (strain K12).